Here is a 63-residue protein sequence, read N- to C-terminus: Large ribosomal subunit protein bL28 (63 aa).

Residues 1 to 20 (MSKRCAITGKGPMVGNNVSH) are disordered.

It belongs to the bacterial ribosomal protein bL28 family.

In Campylobacter concisus (strain 13826), this protein is Large ribosomal subunit protein bL28.